Here is a 415-residue protein sequence, read N- to C-terminus: Metal tolerance protein 5 (415 aa).

The Cytoplasmic segment spans residues 1–124; it reads MAAAVAGGGE…REKVARSETL (124 aa). Residues 125–145 form a helical membrane-spanning segment; that stretch reads AIRLSNIANMVLFAAKVYASV. At 146–150 the chain is on the vacuolar side; it reads RSGSL. A helical transmembrane segment spans residues 151-171; that stretch reads AIIASTLDSLLDLLSGFILWF. At 172–192 the chain is on the cytoplasmic side; it reads TAFSMQTPNPYRYPIGKKRMQ. A helical transmembrane segment spans residues 193 to 213; that stretch reads PLGILVFASVMATLGLQIILE. The Vacuolar segment spans residues 214-232; it reads SVRSLLSDGDEFSLTKEQE. Residues 233-253 traverse the membrane as a helical segment; it reads KWVVDIMLAVTLVKLALVLYC. Topologically, residues 254–268 are cytoplasmic; sequence RTFTNEIVKAYAQDH. A helical transmembrane segment spans residues 269–291; sequence FFDVITNMIGLVAALLATYIEGW. Over 292–293 the chain is Vacuolar; the sequence is ID. A helical transmembrane segment spans residues 294–313; it reads PVGAIILAIYTIRTWSMTVL. Over 314-415 the chain is Cytoplasmic; the sequence is ENVHSLVGQS…RPEHALSHEK (102 aa).

Belongs to the cation diffusion facilitator (CDF) transporter (TC 2.A.4) family. SLC30A subfamily.

The protein resides in the vacuole membrane. In terms of biological role, involved in sequestration of excess metal in the cytoplasm into vacuoles to maintain metal homeostasis. The polypeptide is Metal tolerance protein 5 (MTP5) (Oryza sativa subsp. japonica (Rice)).